A 247-amino-acid chain; its full sequence is Probable transcriptional regulatory protein Gbem_3313 (247 aa).

Belongs to the TACO1 family.

It localises to the cytoplasm. The polypeptide is Probable transcriptional regulatory protein Gbem_3313 (Citrifermentans bemidjiense (strain ATCC BAA-1014 / DSM 16622 / JCM 12645 / Bem) (Geobacter bemidjiensis)).